Reading from the N-terminus, the 100-residue chain is Aspartyl/glutamyl-tRNA(Asn/Gln) amidotransferase subunit C (100 aa).

The protein belongs to the GatC family. As to quaternary structure, heterotrimer of A, B and C subunits.

The catalysed reaction is L-glutamyl-tRNA(Gln) + L-glutamine + ATP + H2O = L-glutaminyl-tRNA(Gln) + L-glutamate + ADP + phosphate + H(+). The enzyme catalyses L-aspartyl-tRNA(Asn) + L-glutamine + ATP + H2O = L-asparaginyl-tRNA(Asn) + L-glutamate + ADP + phosphate + 2 H(+). Its function is as follows. Allows the formation of correctly charged Asn-tRNA(Asn) or Gln-tRNA(Gln) through the transamidation of misacylated Asp-tRNA(Asn) or Glu-tRNA(Gln) in organisms which lack either or both of asparaginyl-tRNA or glutaminyl-tRNA synthetases. The reaction takes place in the presence of glutamine and ATP through an activated phospho-Asp-tRNA(Asn) or phospho-Glu-tRNA(Gln). The chain is Aspartyl/glutamyl-tRNA(Asn/Gln) amidotransferase subunit C from Dictyoglomus turgidum (strain DSM 6724 / Z-1310).